Reading from the N-terminus, the 430-residue chain is Adenylosuccinate synthetase (430 aa).

GTP-binding positions include 12–18 and 40–42; these read GDEGKGK and GHT. Aspartate 13 (proton acceptor) is an active-site residue. Residues aspartate 13 and glycine 40 each contribute to the Mg(2+) site. Residues 13-16, 38-41, threonine 128, arginine 142, glutamine 223, threonine 238, and arginine 302 each bind IMP; these read DEGK and NAGH. Histidine 41 (proton donor) is an active-site residue. Residue 298-304 coordinates substrate; that stretch reads TTTGRPR. GTP-binding positions include arginine 304, 330-332, and 412-414; these read SID and SVG.

The protein belongs to the adenylosuccinate synthetase family. In terms of assembly, homodimer. It depends on Mg(2+) as a cofactor.

The protein localises to the cytoplasm. It catalyses the reaction IMP + L-aspartate + GTP = N(6)-(1,2-dicarboxyethyl)-AMP + GDP + phosphate + 2 H(+). It participates in purine metabolism; AMP biosynthesis via de novo pathway; AMP from IMP: step 1/2. Functionally, plays an important role in the de novo pathway of purine nucleotide biosynthesis. Catalyzes the first committed step in the biosynthesis of AMP from IMP. This is Adenylosuccinate synthetase from Streptococcus pyogenes serotype M5 (strain Manfredo).